The primary structure comprises 589 residues: PTS system mannitol-specific EIICB component (589 aa).

Over methionine 1–asparagine 25 the chain is Cytoplasmic. Residues leucine 14–aspartate 347 form the PTS EIIC type-2 domain. Residues isoleucine 26–asparagine 47 form a helical membrane-spanning segment. Residues lysine 48–aspartate 51 are Extracellular-facing. A helical membrane pass occupies residues threonine 52–tyrosine 73. Topologically, residues asparagine 74–phenylalanine 136 are cytoplasmic. The helical transmembrane segment at serine 137–alanine 158 threads the bilayer. At glutamine 159–glycine 167 the chain is on the extracellular side. Residues valine 168–lysine 188 form a helical membrane-spanning segment. Residues isoleucine 189 to alanine 275 are Cytoplasmic-facing. The chain crosses the membrane as a helical span at residues valine 276–threonine 295. Topologically, residues alanine 296–histidine 317 are extracellular. A helical transmembrane segment spans residues leucine 318 to leucine 339. Topologically, residues lysine 340–lysine 589 are cytoplasmic. The region spanning histidine 383 to serine 478 is the PTS EIIB type-2 domain. The active-site Phosphocysteine intermediate; for EIIB activity is the cysteine 389. Phosphocysteine; by EIIA is present on cysteine 389.

As to quaternary structure, homodimer.

Its subcellular location is the cell membrane. The catalysed reaction is D-mannitol(out) + N(pros)-phospho-L-histidyl-[protein] = D-mannitol 1-phosphate(in) + L-histidyl-[protein]. Its function is as follows. The phosphoenolpyruvate-dependent sugar phosphotransferase system (sugar PTS), a major carbohydrate active transport system, catalyzes the phosphorylation of incoming sugar substrates concomitantly with their translocation across the cell membrane. The enzyme II CmtAB PTS system is involved in D-mannitol transport. In Streptococcus mutans serotype c (strain ATCC 700610 / UA159), this protein is PTS system mannitol-specific EIICB component.